The chain runs to 347 residues: Mediator of RNA polymerase II transcription subunit 7 (347 aa).

Disordered stretches follow at residues 97–172 (GIER…TQTH) and 302–326 (VPVGARTGTTVGDRRVGVDGEGAEE). 2 stretches are compositionally biased toward low complexity: residues 108–171 (STTT…STQT) and 302–312 (VPVGARTGTTV).

The protein belongs to the Mediator complex subunit 7 family. Component of the Mediator complex.

Its subcellular location is the nucleus. Its function is as follows. Component of the Mediator complex, a coactivator involved in the regulated transcription of nearly all RNA polymerase II-dependent genes. Mediator functions as a bridge to convey information from gene-specific regulatory proteins to the basal RNA polymerase II transcription machinery. Mediator is recruited to promoters by direct interactions with regulatory proteins and serves as a scaffold for the assembly of a functional preinitiation complex with RNA polymerase II and the general transcription factors. This chain is Mediator of RNA polymerase II transcription subunit 7 (med-7), found in Neurospora crassa (strain ATCC 24698 / 74-OR23-1A / CBS 708.71 / DSM 1257 / FGSC 987).